Consider the following 74-residue polypeptide: High-potential iron-sulfur protein isozyme 2 (74 aa).

C36, C39, C53, and C67 together coordinate [4Fe-4S] cluster.

In terms of assembly, homodimer.

Specific class of high-redox-potential 4Fe-4S ferredoxins. Functions in anaerobic electron transport in most purple and in some other photosynthetic bacteria and in at least one genus (Paracoccus) of halophilic, denitrifying bacteria. The polypeptide is High-potential iron-sulfur protein isozyme 2 (Ectothiorhodospira mobilis).